Consider the following 437-residue polypeptide: Xylose isomerase (437 aa).

Catalysis depends on residues His101 and Asp104. Residues Glu232, Glu268, His271, Asp296, Asp307, Asp309, and Asp339 each coordinate Mg(2+).

Belongs to the xylose isomerase family. In terms of assembly, homotetramer. Mg(2+) serves as cofactor.

It is found in the cytoplasm. It carries out the reaction alpha-D-xylose = alpha-D-xylulofuranose. This chain is Xylose isomerase, found in Actinobacillus succinogenes (strain ATCC 55618 / DSM 22257 / CCUG 43843 / 130Z).